Here is a 219-residue protein sequence, read N- to C-terminus: Large ribosomal subunit protein uL1 (219 aa).

Belongs to the universal ribosomal protein uL1 family. As to quaternary structure, part of the 50S ribosomal subunit.

Functionally, binds directly to 23S rRNA. Probably involved in E site tRNA release. Protein L1 is also a translational repressor protein, it controls the translation of its operon by binding to its mRNA. The sequence is that of Large ribosomal subunit protein uL1 from Pyrococcus horikoshii (strain ATCC 700860 / DSM 12428 / JCM 9974 / NBRC 100139 / OT-3).